Consider the following 705-residue polypeptide: Solute carrier family 12 member 8 (705 aa).

The next 11 membrane-spanning stretches (helical) occupy residues 38-58 (FGTW…VVLF), 69-89 (GVLL…ITVL), 92-112 (IGVA…ISSV), 121-141 (VGLL…TGFA), 159-179 (ISVA…KWII), 181-201 (LQLL…VGSF), 232-252 (FFTV…GFNM), 268-288 (LAAV…LGAV), 306-326 (LVGF…CMGG), 368-388 (LVTM…VVTI), and 390-410 (FMLT…AHCG). Residues 472–512 (ESRQLGSREGNNPKNQKRKGKKGAKQTLQDSFLLDPGSPLS) are disordered. The segment covering 486-495 (NQKRKGKKGA) has biased composition (basic residues). Helical transmembrane passes span 587 to 607 (WVSL…QWLY) and 612 to 632 (MGVA…LYLG).

The protein belongs to the SLC12A transporter family.

Its subcellular location is the membrane. Its function is as follows. Cation/chloride cotransporter that may play a role in the control of keratinocyte proliferation. This is Solute carrier family 12 member 8 (Slc12a8) from Mus musculus (Mouse).